The following is a 414-amino-acid chain: Glucose-1-phosphate adenylyltransferase (414 aa).

Alpha-D-glucose 1-phosphate-binding positions include Tyr-103, Gly-168, 183 to 184 (EK), and Ser-201.

Belongs to the bacterial/plant glucose-1-phosphate adenylyltransferase family. As to quaternary structure, homotetramer.

The catalysed reaction is alpha-D-glucose 1-phosphate + ATP + H(+) = ADP-alpha-D-glucose + diphosphate. It functions in the pathway glycan biosynthesis; glycogen biosynthesis. Its function is as follows. Involved in the biosynthesis of ADP-glucose, a building block required for the elongation reactions to produce glycogen. Catalyzes the reaction between ATP and alpha-D-glucose 1-phosphate (G1P) to produce pyrophosphate and ADP-Glc. In Thermus caldophilus, this protein is Glucose-1-phosphate adenylyltransferase.